A 119-amino-acid chain; its full sequence is Large ribosomal subunit protein bL20 (119 aa).

This sequence belongs to the bacterial ribosomal protein bL20 family.

Its function is as follows. Binds directly to 23S ribosomal RNA and is necessary for the in vitro assembly process of the 50S ribosomal subunit. It is not involved in the protein synthesizing functions of that subunit. The polypeptide is Large ribosomal subunit protein bL20 (Streptococcus pneumoniae serotype 2 (strain D39 / NCTC 7466)).